The following is a 923-amino-acid chain: Periodic tryptophan protein 2 (923 aa).

WD repeat units lie at residues 12-52, 53-93, 94-132, 144-183, and 189-228; these read GTVY…TFEY, EHRK…LHHF, NFKE…KDRQ, GHFQ…KNLA, and GHRD…SDDD. Residues serine 225 and serine 232 each carry the phosphoserine modification. 8 WD repeats span residues 258–297, 300–340, 343–382, 385–424, 428–470, 471–510, 513–552, and 575–614; these read ANQA…LIQQ, MGQN…YILK, GHFD…CLAT, EHTS…NFRT, TERI…DALS, GHEG…QQVE, EVYS…QVGN, and ERSK…LLKR. Serine 651 and serine 664 each carry phosphoserine. Positions 653 to 674 are disordered; sequence LEDRIDNSLPGSQRGGDLSTRK. One copy of the WD 14 repeat lies at 676-714; sequence RPEVRVTSVQFSPTANAFAAASTEGLLIYSTNDTILFDP. Composition is skewed to acidic residues over residues 869 to 893 and 911 to 923; these read KDDA…DEEG and DSSD…KELP. The interval 869–923 is disordered; the sequence is KDDADEDNEENEENDVVMESDDEEGWIGFNGKDNKLPLSNENDSSDEEENEKELP. 2 positions are modified to phosphoserine: serine 912 and serine 913.

It belongs to the WD repeat PWP2 family. As to quaternary structure, interacts with snoRNA U3. Interacts with MPP10. Component of the ribosomal small subunit (SSU) processome composed of at least 40 protein subunits and snoRNA U3.

The protein resides in the nucleus. Its subcellular location is the nucleolus. Functionally, required for bud-site selection and cell separation. Also involved in nucleolar processing of pre-18S ribosomal RNA. This chain is Periodic tryptophan protein 2 (PWP2), found in Saccharomyces cerevisiae (strain ATCC 204508 / S288c) (Baker's yeast).